The chain runs to 321 residues: Lipoyl synthase (321 aa).

[4Fe-4S] cluster-binding residues include Cys68, Cys73, Cys79, Cys94, Cys98, Cys101, and Ser308. Residues 80 to 297 enclose the Radical SAM core domain; sequence FNHGTATFMI…KEEALAMGFT (218 aa).

It belongs to the radical SAM superfamily. Lipoyl synthase family. Requires [4Fe-4S] cluster as cofactor.

The protein resides in the cytoplasm. It catalyses the reaction [[Fe-S] cluster scaffold protein carrying a second [4Fe-4S](2+) cluster] + N(6)-octanoyl-L-lysyl-[protein] + 2 oxidized [2Fe-2S]-[ferredoxin] + 2 S-adenosyl-L-methionine + 4 H(+) = [[Fe-S] cluster scaffold protein] + N(6)-[(R)-dihydrolipoyl]-L-lysyl-[protein] + 4 Fe(3+) + 2 hydrogen sulfide + 2 5'-deoxyadenosine + 2 L-methionine + 2 reduced [2Fe-2S]-[ferredoxin]. Its pathway is protein modification; protein lipoylation via endogenous pathway; protein N(6)-(lipoyl)lysine from octanoyl-[acyl-carrier-protein]: step 2/2. Its function is as follows. Catalyzes the radical-mediated insertion of two sulfur atoms into the C-6 and C-8 positions of the octanoyl moiety bound to the lipoyl domains of lipoate-dependent enzymes, thereby converting the octanoylated domains into lipoylated derivatives. The protein is Lipoyl synthase of Photorhabdus laumondii subsp. laumondii (strain DSM 15139 / CIP 105565 / TT01) (Photorhabdus luminescens subsp. laumondii).